Consider the following 481-residue polypeptide: Glutamate--tRNA ligase (481 aa).

The 'HIGH' region signature appears at Pro-9–Thr-19. The short motif at Lys-247–Arg-251 is the 'KMSKS' region element. Residue Lys-250 participates in ATP binding.

Belongs to the class-I aminoacyl-tRNA synthetase family. Glutamate--tRNA ligase type 1 subfamily. Monomer.

It is found in the cytoplasm. It carries out the reaction tRNA(Glu) + L-glutamate + ATP = L-glutamyl-tRNA(Glu) + AMP + diphosphate. Functionally, catalyzes the attachment of glutamate to tRNA(Glu) in a two-step reaction: glutamate is first activated by ATP to form Glu-AMP and then transferred to the acceptor end of tRNA(Glu). This Nostoc punctiforme (strain ATCC 29133 / PCC 73102) protein is Glutamate--tRNA ligase.